Consider the following 440-residue polypeptide: MESQQLSNYPQISHGSACASVTSKEVHTNQDPLDVSASKTEECEKASTKANSQQTTTPASSAVPENPHHASPQPASVPPPQNGPYPQQCMMTQNQANPSGWSFYGHPSMIPYTPYQMSPMYFPPGPQSQFPQYPSSVGTPLSTPSPESGNTFTDSSSADSDMTSTKKYVRPPPMLTSPNDFPNWVKTYIKFLQNSNLGGIIPTVNGKPVRQITDDELTFLYNTFQIFAPSQFLPTWVKDILSVDYTDIMKILSKSIEKMQSDTQEANDIVTLANLQYNGSTPADAFETKVTNIINRLNNNGIHINNKVACQLIMRGLSGEYKFLRYTRHRHLNMTVAELFLDIHAIYEEQQGSRNSKPNYRRNLSDEKNDSRSYTNTTKPKVIARNPQKTNNSKSKTARAHNVSTSNNSPSTDNDSISKSTTEPIQLNNKHDLHLRPGTY.

3 stretches are compositionally biased toward polar residues: residues Met1–Ser23, Thr48–Ser60, and Gln127–Phe152. Disordered stretches follow at residues Met1–Gln93, Pro126–Pro173, and Gly352–Tyr440. The span at Thr153 to Thr165 shows a compositional bias: low complexity. Positions Asn299 to His401 are RNA-binding. Residues Asn402–Ser418 are compositionally biased toward low complexity. Phosphoserine is present on Ser416. The segment covering Lys419 to Asn428 has biased composition (polar residues). Residues Asn429–Tyr440 are compositionally biased toward basic and acidic residues.

Homotrimer.

The protein resides in the cytoplasm. Capsid protein (CA) is the structural component of the virus-like particle (VLP), forming the shell that encapsulates the retrotransposons dimeric RNA genome. The particles are assembled from trimer-clustered units and there are holes in the capsid shells that allow for the diffusion of macromolecules. CA also has nucleocapsid-like chaperone activity, promoting primer tRNA(i)-Met annealing to the multipartite primer-binding site (PBS), dimerization of Ty1 RNA and initiation of reverse transcription. The polypeptide is Transposon Ty1-OL Gag polyprotein (TY1A-OL) (Saccharomyces cerevisiae (strain ATCC 204508 / S288c) (Baker's yeast)).